Consider the following 394-residue polypeptide: S-adenosylmethionine synthase 2 (394 aa).

Glu-11 is a Mg(2+) binding site. His-17 is an ATP binding site. Glu-45 provides a ligand contact to K(+). L-methionine-binding residues include Glu-58 and Gln-101. Residues 169–171, 237–240, Asp-248, 254–255, Ala-271, Lys-275, and Lys-279 each bind ATP; these read DGK, SGRF, and RK. Asp-248 contacts L-methionine. Lys-279 lines the L-methionine pocket.

The protein belongs to the AdoMet synthase family. As to quaternary structure, homotetramer. The cofactor is Mn(2+). Mg(2+) serves as cofactor. Co(2+) is required as a cofactor. Requires K(+) as cofactor.

The protein resides in the cytoplasm. The catalysed reaction is L-methionine + ATP + H2O = S-adenosyl-L-methionine + phosphate + diphosphate. The protein operates within amino-acid biosynthesis; S-adenosyl-L-methionine biosynthesis; S-adenosyl-L-methionine from L-methionine: step 1/1. Catalyzes the formation of S-adenosylmethionine from methionine and ATP. The reaction comprises two steps that are both catalyzed by the same enzyme: formation of S-adenosylmethionine (AdoMet) and triphosphate, and subsequent hydrolysis of the triphosphate. This Hordeum vulgare (Barley) protein is S-adenosylmethionine synthase 2 (SAM2).